The sequence spans 83 residues: Host transcription reprogramming factor 9 (83 aa).

An N-terminal signal peptide occupies residues 1 to 19; that stretch reads MQFSKITLAIVLYALGTAA. The C2H2-type zinc-finger motif lies at 54-77; the sequence is YRCDKCEKEFVKGNDFFNHGGRGH.

Its subcellular location is the secreted. The protein localises to the host nucleus. Functionally, probable secreted effector that translocates into the nuclei of host cells to reprogram the expression of targeted genes by binding on effector binding elements in rice. The sequence is that of Host transcription reprogramming factor 9 from Pyricularia oryzae (strain 70-15 / ATCC MYA-4617 / FGSC 8958) (Rice blast fungus).